The primary structure comprises 546 residues: Flavin-dependent oxygenase ucdF (546 aa).

The FAD-binding PCMH-type domain maps to 81-263 (QGRIPYYAVM…VNTTIRTFPD (183 aa)).

It belongs to the oxygen-dependent FAD-linked oxidoreductase family.

In terms of biological role, nonribosomal peptide synthetase that mediates the biosynthesis of usterphenyllins and uscandidusins, p-terphenyl derivatives. The function of ucdF within the pathway still remains to be determined. UcdE further prenylates position C-14 of ring C of usterphenyllin B to form usterphenyllin A. The pathway begin with the biosynthesis of 4-hydroxyphenylpyruvate (HPPA) from L-tyrosine, possibly by the aminotransferase ucdG. The nonribosomal peptide synthetase ucdA then condenses two HPPA units to produce atromentin. The key step in this pathway is the reduction and dehydration of atromentin to form a terphenyl triol intermediate, performed by the NAD-dependent dehydrogenase ucdB. Further O-methylation by the methyltransferase ucdC forms terphenyllin carrying two methoxy moieties at C-9 and C-12, and subsequent dihydroxylation at C-3 of ring A and C-15 of ring C by the flavin-dependent oxygenase ucdD leads to 3,15-dihydroxyterphenyllin. Prenylation by ucdE at position C-5 of ring A forms usterphenyllin B, and is followed by a second prenylation at position C-14 of ring C to form usterphenyllin A. The following furan ring formation that leads to uscandidusins A and B was proven to be an unexpected spontaneous non-enzymatic reaction. This chain is Flavin-dependent oxygenase ucdF, found in Aspergillus ustus.